The sequence spans 593 residues: UvrABC system protein C (593 aa).

In terms of domain architecture, GIY-YIG spans Met17–Ile94. The UVR domain maps to Lys199–Leu234.

Belongs to the UvrC family. In terms of assembly, interacts with UvrB in an incision complex.

Its subcellular location is the cytoplasm. Its function is as follows. The UvrABC repair system catalyzes the recognition and processing of DNA lesions. UvrC both incises the 5' and 3' sides of the lesion. The N-terminal half is responsible for the 3' incision and the C-terminal half is responsible for the 5' incision. This chain is UvrABC system protein C, found in Staphylococcus aureus (strain Mu3 / ATCC 700698).